The primary structure comprises 294 residues: tRNA dimethylallyltransferase (294 aa).

10–17 (GPTAVGKT) is a binding site for ATP. Residue 12–17 (TAVGKT) participates in substrate binding. Positions 35–38 (DSQQ) are interaction with substrate tRNA.

The protein belongs to the IPP transferase family. In terms of assembly, monomer. Requires Mg(2+) as cofactor.

It carries out the reaction adenosine(37) in tRNA + dimethylallyl diphosphate = N(6)-dimethylallyladenosine(37) in tRNA + diphosphate. Functionally, catalyzes the transfer of a dimethylallyl group onto the adenine at position 37 in tRNAs that read codons beginning with uridine, leading to the formation of N6-(dimethylallyl)adenosine (i(6)A). The polypeptide is tRNA dimethylallyltransferase (Streptococcus pneumoniae (strain ATCC 700669 / Spain 23F-1)).